Consider the following 466-residue polypeptide: RUS family member 1 (466 aa).

A2 carries the post-translational modification N-acetylalanine. The chain crosses the membrane as a helical span at residues 245-265; that stretch reads LLMLPLVSDCPSLSLGCFVLL.

It belongs to the RUS1 family.

Its subcellular location is the membrane. The chain is RUS family member 1 from Mus musculus (Mouse).